The sequence spans 298 residues: Ribosomal RNA small subunit methyltransferase A (298 aa).

Residues N35, L37, G62, E83, D108, and N133 each contribute to the S-adenosyl-L-methionine site.

It belongs to the class I-like SAM-binding methyltransferase superfamily. rRNA adenine N(6)-methyltransferase family. RsmA subfamily.

Its subcellular location is the cytoplasm. The enzyme catalyses adenosine(1518)/adenosine(1519) in 16S rRNA + 4 S-adenosyl-L-methionine = N(6)-dimethyladenosine(1518)/N(6)-dimethyladenosine(1519) in 16S rRNA + 4 S-adenosyl-L-homocysteine + 4 H(+). Functionally, specifically dimethylates two adjacent adenosines (A1518 and A1519) in the loop of a conserved hairpin near the 3'-end of 16S rRNA in the 30S particle. May play a critical role in biogenesis of 30S subunits. The polypeptide is Ribosomal RNA small subunit methyltransferase A (Streptococcus pyogenes serotype M2 (strain MGAS10270)).